The sequence spans 313 residues: Probable inactive peptidyl-prolyl cis-trans isomerase-like 6 (313 aa).

The 164-residue stretch at Y147 to V310 folds into the PPIase cyclophilin-type domain.

The protein belongs to the cyclophilin-type PPIase family.

Its function is as follows. Probable inactive PPIase with no peptidyl-prolyl cis-trans isomerase activity. The chain is Probable inactive peptidyl-prolyl cis-trans isomerase-like 6 from Mus musculus (Mouse).